Consider the following 307-residue polypeptide: Ornithine carbamoyltransferase (307 aa).

Residues 54 to 57, Gln81, Arg105, and 132 to 135 each bind carbamoyl phosphate; these read STRT and HPCQ. L-ornithine contacts are provided by residues Asn163, Asp221, and 225 to 226; that span reads SM. Residues 261–262 and Arg289 contribute to the carbamoyl phosphate site; that span reads CL.

Belongs to the aspartate/ornithine carbamoyltransferase superfamily. OTCase family.

The protein localises to the cytoplasm. The enzyme catalyses carbamoyl phosphate + L-ornithine = L-citrulline + phosphate + H(+). Its pathway is amino-acid biosynthesis; L-arginine biosynthesis; L-arginine from L-ornithine and carbamoyl phosphate: step 1/3. Functionally, reversibly catalyzes the transfer of the carbamoyl group from carbamoyl phosphate (CP) to the N(epsilon) atom of ornithine (ORN) to produce L-citrulline. The sequence is that of Ornithine carbamoyltransferase from Chromobacterium violaceum (strain ATCC 12472 / DSM 30191 / JCM 1249 / CCUG 213 / NBRC 12614 / NCIMB 9131 / NCTC 9757 / MK).